The chain runs to 284 residues: Bifunctional protein FolD (284 aa).

NADP(+) is bound by residues 166–168 and Ile-232; that span reads GAS.

This sequence belongs to the tetrahydrofolate dehydrogenase/cyclohydrolase family. As to quaternary structure, homodimer.

It catalyses the reaction (6R)-5,10-methylene-5,6,7,8-tetrahydrofolate + NADP(+) = (6R)-5,10-methenyltetrahydrofolate + NADPH. The enzyme catalyses (6R)-5,10-methenyltetrahydrofolate + H2O = (6R)-10-formyltetrahydrofolate + H(+). The protein operates within one-carbon metabolism; tetrahydrofolate interconversion. Functionally, catalyzes the oxidation of 5,10-methylenetetrahydrofolate to 5,10-methenyltetrahydrofolate and then the hydrolysis of 5,10-methenyltetrahydrofolate to 10-formyltetrahydrofolate. This chain is Bifunctional protein FolD, found in Pseudomonas entomophila (strain L48).